We begin with the raw amino-acid sequence, 66 residues long: Large ribosomal subunit protein bL35 (66 aa).

Basic residues predominate over residues 1–16 (MPKMKTHKGSAKRFKK). Residues 1 to 24 (MPKMKTHKGSAKRFKKTGTGQLKR) are disordered.

Belongs to the bacterial ribosomal protein bL35 family.

The chain is Large ribosomal subunit protein bL35 from Anoxybacillus flavithermus (strain DSM 21510 / WK1).